The following is a 210-amino-acid chain: Probable membrane protein Rv1733c (210 aa).

2 helical membrane passes run 43 to 63 and 165 to 185; these read AVVM…AAAA and ALAA…LLAL.

The protein localises to the cell membrane. The sequence is that of Probable membrane protein Rv1733c from Mycobacterium tuberculosis (strain ATCC 25618 / H37Rv).